Reading from the N-terminus, the 164-residue chain is Cytochrome c oxidase subunit 4, mitochondrial (164 aa).

The N-terminal 33 residues, 1–33, are a transit peptide targeting the mitochondrion; that stretch reads MFMNSMLRVSRQRAAVRSTVSLYRGFVSASIRR. C120, H128, C143, and C146 together coordinate Zn(2+).

It belongs to the cytochrome c oxidase subunit 5B family. In terms of assembly, component of the cytochrome c oxidase (complex IV, CIV), a multisubunit enzyme composed of a catalytic core of 3 subunits and several supernumerary subunits. The complex exists as a monomer or a dimer and forms supercomplexes (SCs) in the inner mitochondrial membrane with ubiquinol-cytochrome c oxidoreductase (cytochrome b-c1 complex, complex III, CIII).

It localises to the mitochondrion inner membrane. Its pathway is energy metabolism; oxidative phosphorylation. Functionally, component of the cytochrome c oxidase, the last enzyme in the mitochondrial electron transport chain which drives oxidative phosphorylation. The respiratory chain contains 3 multisubunit complexes succinate dehydrogenase (complex II, CII), ubiquinol-cytochrome c oxidoreductase (cytochrome b-c1 complex, complex III, CIII) and cytochrome c oxidase (complex IV, CIV), that cooperate to transfer electrons derived from NADH and succinate to molecular oxygen, creating an electrochemical gradient over the inner membrane that drives transmembrane transport and the ATP synthase. Cytochrome c oxidase is the component of the respiratory chain that catalyzes the reduction of oxygen to water. Electrons originating from reduced cytochrome c in the intermembrane space (IMS) are transferred via the dinuclear copper A center (CU(A)) of subunit 2 and heme A of subunit 1 to the active site in subunit 1, a binuclear center (BNC) formed by heme A3 and copper B (CU(B)). The BNC reduces molecular oxygen to 2 water molecules using 4 electrons from cytochrome c in the IMS and 4 protons from the mitochondrial matrix. The polypeptide is Cytochrome c oxidase subunit 4, mitochondrial (cox4) (Schizosaccharomyces pombe (strain 972 / ATCC 24843) (Fission yeast)).